Consider the following 141-residue polypeptide: Pyrophosphate-energized proton pump (141 aa).

The next 3 helical transmembrane spans lie at 11-31 (GLIATGLLSIVGLGVANTLTV), 46-66 (GTNLFVCGLIGLIVTGLIVVI), and 121-141 (LAGLFGTAIAVTAMLGIAGMI).

It belongs to the H(+)-translocating pyrophosphatase (TC 3.A.10) family. Homodimer. It depends on Mg(2+) as a cofactor.

The protein resides in the cell inner membrane. The catalysed reaction is diphosphate + H2O + H(+)(in) = 2 phosphate + 2 H(+)(out). In terms of biological role, proton pump that utilizes the energy of pyrophosphate hydrolysis as the driving force for proton movement across the membrane. Generates a proton motive force. This is Pyrophosphate-energized proton pump (hppA) from Anaplasma marginale.